A 35-amino-acid polypeptide reads, in one-letter code: Tau-theraphotoxin-Pc1b (35 aa).

3 disulfides stabilise this stretch: Cys3–Cys17, Cys10–Cys22, and Cys16–Cys29. Residue Phe35 is modified to Phenylalanine amide.

It belongs to the neurotoxin 10 (Hwtx-1) family. 62 (Vatx) subfamily. Expressed by the venom gland.

It is found in the secreted. In terms of biological role, selectively activates the mammalian capsaicin receptor TRPV1, a non-selective cation channel expressed by sensory neurons of the pain pathway. Is more potent than VaTx1, but less potent than VaTx3. Interacts with distinct regions of the channel than capsaicin, since it only acts on the extracellular face of the channel, and capsaicin binds to the cytosolic side. Also activates avian TRPV1, which is insensitive to capsaicin. Produce weak inhibition on potassium channels Kv2.1/KCNB1. This is Tau-theraphotoxin-Pc1b from Psalmopoeus cambridgei (Trinidad chevron tarantula).